The primary structure comprises 451 residues: Uronate isomerase (451 aa).

It belongs to the metallo-dependent hydrolases superfamily. Uronate isomerase family.

It catalyses the reaction D-glucuronate = D-fructuronate. The catalysed reaction is aldehydo-D-galacturonate = keto-D-tagaturonate. It participates in carbohydrate metabolism; pentose and glucuronate interconversion. The chain is Uronate isomerase from Thermotoga petrophila (strain ATCC BAA-488 / DSM 13995 / JCM 10881 / RKU-1).